A 234-amino-acid chain; its full sequence is Large ribosomal subunit protein uL1 (234 aa).

The protein belongs to the universal ribosomal protein uL1 family. In terms of assembly, part of the 50S ribosomal subunit.

In terms of biological role, binds directly to 23S rRNA. The L1 stalk is quite mobile in the ribosome, and is involved in E site tRNA release. Functionally, protein L1 is also a translational repressor protein, it controls the translation of the L11 operon by binding to its mRNA. The sequence is that of Large ribosomal subunit protein uL1 from Salmonella agona (strain SL483).